A 324-amino-acid polypeptide reads, in one-letter code: NAD(P)H-dependent D-xylose reductase XYR1 (324 aa).

Tyr-50 functions as the Proton donor in the catalytic mechanism. His-112 provides a ligand contact to substrate. NAD(+) is bound by residues Ser-168–Asn-169, Ser-217–Glu-226, and Lys-273–Asn-283.

Belongs to the aldo/keto reductase family.

The catalysed reaction is xylitol + NAD(+) = D-xylose + NADH + H(+). The enzyme catalyses xylitol + NADP(+) = D-xylose + NADPH + H(+). Its pathway is carbohydrate metabolism; D-xylose degradation. Its function is as follows. Catalyzes the initial reaction in the xylose utilization pathway by reducing D-xylose into xylitol. Xylose is a major component of hemicelluloses such as xylan. Most fungi utilize D-xylose via three enzymatic reactions, xylose reductase (XR), xylitol dehydrogenase (XDH), and xylulokinase, to form xylulose 5-phosphate, which enters pentose phosphate pathway. The chain is NAD(P)H-dependent D-xylose reductase XYR1 (XYR1) from Pyricularia oryzae (strain 70-15 / ATCC MYA-4617 / FGSC 8958) (Rice blast fungus).